The chain runs to 212 residues: Cyclin-dependent kinase inhibitor 3 (212 aa).

Over residues 1–12 (MKPPSSIQTSEF) the composition is skewed to polar residues. The tract at residues 1–23 (MKPPSSIQTSEFDSSDEEPIEDE) is disordered. Positions 1-34 (MKPPSSIQTSEFDSSDEEPIEDEQTPIQISWLPL) are interaction with CDK2. Acidic residues predominate over residues 13–23 (DSSDEEPIEDE). A Tyrosine-protein phosphatase domain is found at 32 to 201 (LPLSRVNYSQ…FRDKLAAHLS (170 aa)). Cys140 (phosphocysteine intermediate) is an active-site residue.

Belongs to the protein-tyrosine phosphatase family. In terms of assembly, interacts with cyclin-dependent kinases such as CDK1, CDK2 and CDK3. Does not interact with CDK4. Interacts (via C-terminus) with phosphorylated CDK2 (via C-terminal helix). Interacts with MS4A3 (via C-terminus); the interaction enhances CDKN3 enzymatic activity.

Its subcellular location is the cytoplasm. The protein resides in the perinuclear region. It catalyses the reaction O-phospho-L-tyrosyl-[protein] + H2O = L-tyrosyl-[protein] + phosphate. It carries out the reaction O-phospho-L-seryl-[protein] + H2O = L-seryl-[protein] + phosphate. The catalysed reaction is O-phospho-L-threonyl-[protein] + H2O = L-threonyl-[protein] + phosphate. May play a role in cell cycle regulation. Dual specificity phosphatase active toward substrates containing either phosphotyrosine or phosphoserine residues. Dephosphorylates CDK2 at 'Thr-160' in a cyclin-dependent manner. This chain is Cyclin-dependent kinase inhibitor 3, found in Sus scrofa (Pig).